Reading from the N-terminus, the 508-residue chain is Photosystem II CP47 reaction center protein (508 aa).

6 helical membrane passes run serine 21–serine 36, isoleucine 101–tryptophan 115, glycine 140–phenylalanine 156, isoleucine 203–serine 218, valine 237–valine 252, and serine 457–arginine 472.

The protein belongs to the PsbB/PsbC family. PsbB subfamily. In terms of assembly, PSII is composed of 1 copy each of membrane proteins PsbA, PsbB, PsbC, PsbD, PsbE, PsbF, PsbH, PsbI, PsbJ, PsbK, PsbL, PsbM, PsbT, PsbX, PsbY, PsbZ, Psb30/Ycf12, at least 3 peripheral proteins of the oxygen-evolving complex and a large number of cofactors. It forms dimeric complexes. Binds multiple chlorophylls. PSII binds additional chlorophylls, carotenoids and specific lipids. serves as cofactor.

The protein resides in the plastid. It localises to the chloroplast thylakoid membrane. Functionally, one of the components of the core complex of photosystem II (PSII). It binds chlorophyll and helps catalyze the primary light-induced photochemical processes of PSII. PSII is a light-driven water:plastoquinone oxidoreductase, using light energy to abstract electrons from H(2)O, generating O(2) and a proton gradient subsequently used for ATP formation. The sequence is that of Photosystem II CP47 reaction center protein from Arabis hirsuta (Hairy rock-cress).